Here is an 83-residue protein sequence, read N- to C-terminus: MKTLLLTLVVVTIVCLDLGYSLICFNQETYRPETTTTCPDGEDTCYSTFWNDHRGVKIERGCGCPRVNPGISIICCKTDKCNN.

An N-terminal signal peptide occupies residues 1–21 (MKTLLLTLVVVTIVCLDLGYS). Disulfide bonds link cysteine 24-cysteine 45, cysteine 38-cysteine 62, cysteine 64-cysteine 75, and cysteine 76-cysteine 81.

This sequence belongs to the three-finger toxin family. Short-chain subfamily. As to expression, expressed by the venom gland.

Its subcellular location is the secreted. The polypeptide is Weak neurotoxin WNTX33 (Ophiophagus hannah (King cobra)).